A 184-amino-acid chain; its full sequence is Ribosome-recycling factor (184 aa).

It belongs to the RRF family.

The protein resides in the cytoplasm. Its function is as follows. Responsible for the release of ribosomes from messenger RNA at the termination of protein biosynthesis. May increase the efficiency of translation by recycling ribosomes from one round of translation to another. The protein is Ribosome-recycling factor of Leptospira borgpetersenii serovar Hardjo-bovis (strain JB197).